Here is a 189-residue protein sequence, read N- to C-terminus: S-protein homolog 26 (189 aa).

A signal peptide spans 1 to 25 (MISMNRLSILLFVFAFGLTMMSNTA).

The protein belongs to the plant self-incompatibility (S1) protein family.

It is found in the secreted. The protein is S-protein homolog 26 of Arabidopsis thaliana (Mouse-ear cress).